The primary structure comprises 505 residues: Maturase K (505 aa).

The protein belongs to the intron maturase 2 family. MatK subfamily.

It is found in the plastid. It localises to the chloroplast. Functionally, usually encoded in the trnK tRNA gene intron. Probably assists in splicing its own and other chloroplast group II introns. In Calycanthus occidentalis (Spice bush), this protein is Maturase K.